The chain runs to 274 residues: tRNA-cytidine(32) 2-sulfurtransferase (274 aa).

The PP-loop motif signature appears at 40–45 (SGGKDS). C115, C118, and C206 together coordinate [4Fe-4S] cluster.

The protein belongs to the TtcA family. As to quaternary structure, homodimer. Requires Mg(2+) as cofactor. [4Fe-4S] cluster serves as cofactor.

The protein resides in the cytoplasm. It carries out the reaction cytidine(32) in tRNA + S-sulfanyl-L-cysteinyl-[cysteine desulfurase] + AH2 + ATP = 2-thiocytidine(32) in tRNA + L-cysteinyl-[cysteine desulfurase] + A + AMP + diphosphate + H(+). It participates in tRNA modification. Functionally, catalyzes the ATP-dependent 2-thiolation of cytidine in position 32 of tRNA, to form 2-thiocytidine (s(2)C32). The sulfur atoms are provided by the cysteine/cysteine desulfurase (IscS) system. This Stutzerimonas stutzeri (strain A1501) (Pseudomonas stutzeri) protein is tRNA-cytidine(32) 2-sulfurtransferase.